Consider the following 492-residue polypeptide: GDP-Man:Man(3)GlcNAc(2)-PP-Dol alpha-1,2-mannosyltransferase (492 aa).

Over 1–19 (MAAGERSWCLCKLLRFFYS) the chain is Lumenal. The chain crosses the membrane as a helical span at residues 20 to 40 (LFFPGLIVCGTLCVCLVIVLW). Residues 41-233 (GIRLLLQRKK…TRNPFLSKVK (193 aa)) are Cytoplasmic-facing. Positions 234-254 (LIYYYLFAFIYGLVGSCSDVV) form an intramembrane region, helical. At 255 to 399 (MVNSSWTLNH…IGLHTMWNEH (145 aa)) the chain is on the cytoplasmic side. Positions 400 to 420 (FGIGVVECMAAGTIILAHNSG) form an intramembrane region, helical. The Cytoplasmic segment spans residues 421 to 492 (GPKLDIVVPH…FLSSVEKLFK (72 aa)).

Belongs to the glycosyltransferase group 1 family. Glycosyltransferase 4 subfamily.

It localises to the endoplasmic reticulum membrane. The enzyme catalyses an alpha-D-Man-(1-&gt;3)-[alpha-D-Man-(1-&gt;6)]-beta-D-Man-(1-&gt;4)-beta-D-GlcNAc-(1-&gt;4)-alpha-D-GlcNAc-diphospho-di-trans,poly-cis-dolichol + 2 GDP-alpha-D-mannose = an alpha-D-Man-(1-&gt;2)-alpha-D-Man-(1-&gt;2)-alpha-D-Man-(1-&gt;3)-[alpha-D-Man-(1-&gt;6)]-beta-D-Man-(1-&gt;4)-beta-D-GlcNAc-(1-&gt;4)-alpha-D-GlcNAc-diphospho-di-trans,poly-cis-dolichol + 2 GDP + 2 H(+). It functions in the pathway protein modification; protein glycosylation. In terms of biological role, GDP-Man:Man(3)GlcNAc(2)-PP-Dol alpha-1,2-mannosyltransferase that operates in the biosynthetic pathway of dolichol-linked oligosaccharides, the glycan precursors employed in protein asparagine (N)-glycosylation. The assembly of dolichol-linked oligosaccharides begins on the cytosolic side of the endoplasmic reticulum membrane and finishes in its lumen. The sequential addition of sugars to dolichol pyrophosphate produces dolichol-linked oligosaccharides containing fourteen sugars, including two GlcNAcs, nine mannoses and three glucoses. Once assembled, the oligosaccharide is transferred from the lipid to nascent proteins by oligosaccharyltransferases. Catalyzes, on the cytoplasmic face of the endoplasmic reticulum, the addition of the fourth and fifth mannose residues to the dolichol-linked oligosaccharide chain, to produce Man(5)GlcNAc(2)-PP-dolichol core oligosaccharide. Man(5)GlcNAc(2)-PP-dolichol is a substrate for ALG3, the following enzyme in the biosynthetic pathway. The chain is GDP-Man:Man(3)GlcNAc(2)-PP-Dol alpha-1,2-mannosyltransferase from Homo sapiens (Human).